The following is a 158-amino-acid chain: MTFKGFQMNEEKLEIGIQDASSENCQLQESQKQLLQEAEVWKEQVSELNKQKITFEDSKVHAEQVLNDKENHIETLTERLLKIKDQAAVLEEDITDDGNLELEMNSELKDGAYLDNPPKGALKKLIHAAKLNASLTTLEGERNQFIFSYLKLIKPGRA.

Residues 26 to 96 (QLQESQKQLL…AAVLEEDITD (71 aa)) are a coiled coil.

This sequence belongs to the cTAGE family. Expressed in normal tissues including colon, mammary gland, ovary, placenta, stomach and testis, as well as several fetal tissues.

Tumor-associated antigen. This is Putative cTAGE family member 3 (CTAGE3P) from Homo sapiens (Human).